Reading from the N-terminus, the 228-residue chain is MLQAEMIVFVGVILWMCVFSQEPSSKVMADRYAVFWNRTNPRFQRGDYHIDVCINDYLDVYCPHYEDSVPEERTERYVLYMVNYDGYSTCDHTAKGFKRWECNRPHSPNGPLKFSEKFQLFTPFSLGFEFRPGREYYYISSMITETGRRSCLKLKVFVRPPNGCEKTIGVHDRVFVDDKVDNALEPRDDTSHEAEPSRSDVSTSGLRHQTSRPLLALLLLCISLYLLL.

A signal peptide spans 1 to 20 (MLQAEMIVFVGVILWMCVFS). The region spanning 29–162 (ADRYAVFWNR…KLKVFVRPPN (134 aa)) is the Ephrin RBD domain. Asn37 is a glycosylation site (N-linked (GlcNAc...) asparagine). Disulfide bonds link Cys62–Cys102 and Cys90–Cys151. The segment covering 184–198 (LEPRDDTSHEAEPSR) has biased composition (basic and acidic residues). The segment at 184–205 (LEPRDDTSHEAEPSRSDVSTSG) is disordered. Residue Ser204 is the site of GPI-anchor amidated serine attachment. Positions 205 to 228 (GLRHQTSRPLLALLLLCISLYLLL) are cleaved as a propeptide — removed in mature form.

This sequence belongs to the ephrin family. As to expression, widespread expression in the embryo.

It localises to the cell membrane. Functionally, cell surface GPI-bound ligand for Eph receptors, a family of receptor tyrosine kinases which are crucial for migration, repulsion and adhesion during neuronal, vascular and epithelial development. Binds promiscuously Eph receptors residing on adjacent cells, leading to contact-dependent bidirectional signaling into neighboring cells. Induces compartmentalized signaling within a caveolae-like membrane microdomain when bound to the extracellular domain of its cognate receptor. This signaling event requires the activity of the Fyn tyrosine kinase. Activates the epha3 receptor to regulate cell-cell adhesion and cytoskeletal organization. With the receptor epha2 may regulate lens fiber cells shape and interactions and be important for lens transparency maintenance. May function actively to stimulate axon fasciculation. Controls axon growth and may be involved in the creation of the retino-tectal map. This chain is Ephrin-A5b (efna5b), found in Danio rerio (Zebrafish).